A 154-amino-acid polypeptide reads, in one-letter code: Myoglobin (154 aa).

The Globin domain occupies 1–147 (MADVKKNCLA…FNDECQHQLA (147 aa)). Heme b is bound at residue His96.

The protein belongs to the globin family.

The protein localises to the cytoplasm. The polypeptide is Myoglobin (GLBB) (Nippostrongylus brasiliensis (Rat hookworm)).